Reading from the N-terminus, the 932-residue chain is Isoleucine--tRNA ligase (932 aa).

The short motif at 57–67 is the 'HIGH' region element; sequence PYANGNIHLGH. Glutamate 552 contributes to the L-isoleucyl-5'-AMP binding site. The 'KMSKS' region motif lies at 593 to 597; that stretch reads KMSKS. Residue lysine 596 coordinates ATP. Zn(2+)-binding residues include cysteine 889, cysteine 892, cysteine 911, and cysteine 914.

Belongs to the class-I aminoacyl-tRNA synthetase family. IleS type 1 subfamily. Monomer. Zn(2+) serves as cofactor.

The protein resides in the cytoplasm. The enzyme catalyses tRNA(Ile) + L-isoleucine + ATP = L-isoleucyl-tRNA(Ile) + AMP + diphosphate. Catalyzes the attachment of isoleucine to tRNA(Ile). As IleRS can inadvertently accommodate and process structurally similar amino acids such as valine, to avoid such errors it has two additional distinct tRNA(Ile)-dependent editing activities. One activity is designated as 'pretransfer' editing and involves the hydrolysis of activated Val-AMP. The other activity is designated 'posttransfer' editing and involves deacylation of mischarged Val-tRNA(Ile). In Lactococcus lactis subsp. lactis (strain IL1403) (Streptococcus lactis), this protein is Isoleucine--tRNA ligase.